Reading from the N-terminus, the 362-residue chain is Phosphoserine aminotransferase (362 aa).

L-glutamate contacts are provided by S9 and R42. Residues 76–77 (GR), W102, T153, D174, and Q197 each bind pyridoxal 5'-phosphate. K198 carries the N6-(pyridoxal phosphate)lysine modification. 239-240 (NT) contributes to the pyridoxal 5'-phosphate binding site.

The protein belongs to the class-V pyridoxal-phosphate-dependent aminotransferase family. SerC subfamily. In terms of assembly, homodimer. Pyridoxal 5'-phosphate is required as a cofactor.

The protein resides in the cytoplasm. The enzyme catalyses O-phospho-L-serine + 2-oxoglutarate = 3-phosphooxypyruvate + L-glutamate. It carries out the reaction 4-(phosphooxy)-L-threonine + 2-oxoglutarate = (R)-3-hydroxy-2-oxo-4-phosphooxybutanoate + L-glutamate. It functions in the pathway amino-acid biosynthesis; L-serine biosynthesis; L-serine from 3-phospho-D-glycerate: step 2/3. The protein operates within cofactor biosynthesis; pyridoxine 5'-phosphate biosynthesis; pyridoxine 5'-phosphate from D-erythrose 4-phosphate: step 3/5. Its function is as follows. Catalyzes the reversible conversion of 3-phosphohydroxypyruvate to phosphoserine and of 3-hydroxy-2-oxo-4-phosphonooxybutanoate to phosphohydroxythreonine. In Enterobacter sp. (strain 638), this protein is Phosphoserine aminotransferase.